A 71-amino-acid polypeptide reads, in one-letter code: Pro-glucagon (71 aa).

The protein belongs to the glucagon family.

The protein resides in the secreted. In terms of biological role, plays a key role in glucose metabolism and homeostasis. Regulates blood glucose by increasing gluconeogenesis and decreasing glycolysis. The polypeptide is Pro-glucagon (gcg) (Piaractus mesopotamicus (Small-scaled pacu)).